The following is a 465-amino-acid chain: Lactaldehyde dehydrogenase (465 aa).

220-225 (GSVEIG) provides a ligand contact to NAD(+). Active-site residues include Glu-240 and Cys-274.

Belongs to the aldehyde dehydrogenase family. In terms of assembly, homotetramer.

It carries out the reaction (S)-lactaldehyde + NAD(+) + H2O = (S)-lactate + NADH + 2 H(+). The protein operates within cofactor biosynthesis; coenzyme F420 biosynthesis. Functionally, involved in F420 biosynthesis through the oxidation of lactaldehyde to lactate. The polypeptide is Lactaldehyde dehydrogenase (Methanococcus maripaludis (strain C7 / ATCC BAA-1331)).